The sequence spans 312 residues: Large ribosomal subunit protein uL10 (312 aa).

Lysine 14 participates in a covalent cross-link: Glycyl lysine isopeptide (Lys-Gly) (interchain with G-Cter in ubiquitin). Serine 68 bears the Phosphoserine mark. Glycyl lysine isopeptide (Lys-Gly) (interchain with G-Cter in ubiquitin) cross-links involve residues lysine 97 and lysine 144. The segment at 199–230 (SSILDITDEELVSHFVSAVSTIASISLAIGYP) is interaction with P1A-P2B. An interaction with P1B-P2A region spans residues 231-258 (TLPSVGHTLINNYKDLLAVAIAASYHYP). Low complexity predominate over residues 278 to 293 (PAATSAASGDAAPAEE). A disordered region spans residues 278–312 (PAATSAASGDAAPAEEAAAEEEEESDDDMGFGLFD). The segment covering 294 to 306 (AAAEEEEESDDDM) has biased composition (acidic residues). Serine 302 is modified (phosphoserine; by CK2).

This sequence belongs to the universal ribosomal protein uL10 family. Component of the large ribosomal subunit (LSU). Mature yeast ribosomes consist of a small (40S) and a large (60S) subunit. The 40S small subunit contains 1 molecule of ribosomal RNA (18S rRNA) and 33 different proteins (encoded by 57 genes). The large 60S subunit contains 3 rRNA molecules (25S, 5.8S and 5S rRNA) and 46 different proteins (encoded by 81 genes). The 5 acidic ribosomal P-proteins form the stalk structure of the 60S subunit. They are organized as a pentameric complex in which uL10/P0 interacts with 2 heterodimers, P1A-P2B and P1B-P2A. uL10 directly interacts with 28S rRNA. uL10 interacts with YFL034W.

It is found in the cytoplasm. Component of the ribosome, a large ribonucleoprotein complex responsible for the synthesis of proteins in the cell. The small ribosomal subunit (SSU) binds messenger RNAs (mRNAs) and translates the encoded message by selecting cognate aminoacyl-transfer RNA (tRNA) molecules. The large subunit (LSU) contains the ribosomal catalytic site termed the peptidyl transferase center (PTC), which catalyzes the formation of peptide bonds, thereby polymerizing the amino acids delivered by tRNAs into a polypeptide chain. The nascent polypeptides leave the ribosome through a tunnel in the LSU and interact with protein factors that function in enzymatic processing, targeting, and the membrane insertion of nascent chains at the exit of the ribosomal tunnel. uL10 forms part of the P stalk that participates in recruiting G proteins to the ribosome. The polypeptide is Large ribosomal subunit protein uL10 (Saccharomyces cerevisiae (strain ATCC 204508 / S288c) (Baker's yeast)).